A 283-amino-acid polypeptide reads, in one-letter code: Bifunctional protein FolD (283 aa).

NADP(+) contacts are provided by residues 166 to 168 (GRS), S191, and I232.

The protein belongs to the tetrahydrofolate dehydrogenase/cyclohydrolase family. Homodimer.

The enzyme catalyses (6R)-5,10-methylene-5,6,7,8-tetrahydrofolate + NADP(+) = (6R)-5,10-methenyltetrahydrofolate + NADPH. It carries out the reaction (6R)-5,10-methenyltetrahydrofolate + H2O = (6R)-10-formyltetrahydrofolate + H(+). Its pathway is one-carbon metabolism; tetrahydrofolate interconversion. Catalyzes the oxidation of 5,10-methylenetetrahydrofolate to 5,10-methenyltetrahydrofolate and then the hydrolysis of 5,10-methenyltetrahydrofolate to 10-formyltetrahydrofolate. This Rickettsia bellii (strain RML369-C) protein is Bifunctional protein FolD.